Consider the following 359-residue polypeptide: Peptide chain release factor 1 (359 aa).

Q235 is modified (N5-methylglutamine). Basic and acidic residues predominate over residues R282–R307. The disordered stretch occupies residues R282 to Y309.

It belongs to the prokaryotic/mitochondrial release factor family. In terms of processing, methylated by PrmC. Methylation increases the termination efficiency of RF1.

Its subcellular location is the cytoplasm. Its function is as follows. Peptide chain release factor 1 directs the termination of translation in response to the peptide chain termination codons UAG and UAA. The polypeptide is Peptide chain release factor 1 (Allorhizobium ampelinum (strain ATCC BAA-846 / DSM 112012 / S4) (Agrobacterium vitis (strain S4))).